A 564-amino-acid chain; its full sequence is 3beta-hydroxysteroid-dehydrogenase/decarboxylase isoform 2 (564 aa).

Residue 16 to 21 (GGRGFA) coordinates NAD(+). Residues Asn146 and Asn158 are each glycosylated (N-linked (GlcNAc...) asparagine). NAD(+) is bound by residues Tyr161 and Lys165. Catalysis depends on Lys165, which acts as the Proton donor. In terms of domain architecture, Reticulon spans 384–564 (VADTLLWKDL…EKLFGSKKHD (181 aa)). 2 helical membrane passes run 398–418 (IAIFILISIYYNFVATGSTVV) and 424–444 (ALLVASVFLFLHGILPEKIFG). A glycan (N-linked (GlcNAc...) asparagine) is linked at Asn474. Helical transmembrane passes span 486–506 (GNDWSFFFKVVFVLLALSLAG) and 507–527 (AISLHSIFVIGLPIAFLAFLV).

Belongs to the 3-beta-HSD family.

The protein resides in the endoplasmic reticulum membrane. The enzyme catalyses a 3beta-hydroxysteroid-4alpha-carboxylate + NAD(+) = a 3-oxosteroid + CO2 + NADH. It carries out the reaction 4alpha-carboxy-4beta,14alpha-dimethyl-9beta,19-cyclo-5alpha-ergost-24(24(1))-en-3beta-ol + NAD(+) = cycloeucalenone + CO2 + NADH. Its pathway is steroid biosynthesis; zymosterol biosynthesis; zymosterol from lanosterol: step 4/6. 3beta-hydroxysteroid-dehydrogenase/decarboxylase involved in sterol synthesis. Catalyzes the formation of 3-oxosteroids from 3beta-hydroxysteroids-4alpha-carboxylate. Involved in the regulation of inflorescence internodes and leaves growth, probably by affecting auxin transporter activity possibly by altering sterol composition in the membranes. The sequence is that of 3beta-hydroxysteroid-dehydrogenase/decarboxylase isoform 2 from Arabidopsis thaliana (Mouse-ear cress).